The sequence spans 393 residues: S-adenosylmethionine synthase 3 (393 aa).

Glu9 lines the Mg(2+) pocket. His15 provides a ligand contact to ATP. Glu43 is a K(+) binding site. L-methionine is bound by residues Glu56 and Gln99. Residues 167–169, 235–238, Asp246, 252–253, Ala269, Lys273, and Lys277 each bind ATP; these read NGK, SGRF, and RK. Asp246 contacts L-methionine. Residue Lys277 coordinates L-methionine.

This sequence belongs to the AdoMet synthase family. As to quaternary structure, homotetramer. Requires Mn(2+) as cofactor. Mg(2+) is required as a cofactor. It depends on Co(2+) as a cofactor. K(+) serves as cofactor. In terms of tissue distribution, mostly expressed in flowers, seedpods and roots, and, to a lower extent, in stems and leaves.

It localises to the cytoplasm. The enzyme catalyses L-methionine + ATP + H2O = S-adenosyl-L-methionine + phosphate + diphosphate. It functions in the pathway amino-acid biosynthesis; S-adenosyl-L-methionine biosynthesis; S-adenosyl-L-methionine from L-methionine: step 1/1. In terms of biological role, catalyzes the formation of S-adenosylmethionine from methionine and ATP. The reaction comprises two steps that are both catalyzed by the same enzyme: formation of S-adenosylmethionine (AdoMet) and triphosphate, and subsequent hydrolysis of the triphosphate. This Brassica juncea (Indian mustard) protein is S-adenosylmethionine synthase 3 (MSAMS3).